A 560-amino-acid chain; its full sequence is Aluminum-activated malate transporter 12 (560 aa).

6 helical membrane-spanning segments follow: residues 54 to 74 (VGLSLTLVSLLYLMEPLFKGI), 78 to 98 (AIWAVMTVVVVLEFSAGATLC), 104 to 124 (GLGTLIAGSLAFFIEFVANDS), 130 to 150 (AIFIGTAVFIIGAAATYIRFI), 156 to 176 (NYDYGVVIFLLTFNLITVSSY), and 189 to 209 (FYTIAVGCGICLFMSLLVFPI). The segment at 386–421 (LHRHNNKHQNGSISNNKHHQRNSSNSGKDLNGDVSL) is disordered. The span at 407–421 (NSSNSGKDLNGDVSL) shows a compositional bias: polar residues.

Belongs to the aromatic acid exporter (TC 2.A.85) family. As to expression, expressed in roots, stems, leaves, flowers and pollen. Mainly detected in the roots vascular stele and in the leaves guard cells.

The protein localises to the cell membrane. Its function is as follows. Malate-sensitive anion transporter permeable to chloride, nitrate, sulfate and malate. Involved in dark-, CO(2)-, abscisic acid- and water-deficient-induced stomatal closure. Belongs to the R-type anion channels. This chain is Aluminum-activated malate transporter 12 (ALMT12), found in Arabidopsis thaliana (Mouse-ear cress).